The following is a 194-amino-acid chain: Pyridoxal 5'-phosphate synthase subunit PdxT (194 aa).

50-52 (GES) contributes to the L-glutamine binding site. Cys82 serves as the catalytic Nucleophile. L-glutamine contacts are provided by residues Arg109 and 136–137 (IR). Catalysis depends on charge relay system residues His172 and Glu174.

Belongs to the glutaminase PdxT/SNO family. In the presence of PdxS, forms a dodecamer of heterodimers. Only shows activity in the heterodimer.

It carries out the reaction aldehydo-D-ribose 5-phosphate + D-glyceraldehyde 3-phosphate + L-glutamine = pyridoxal 5'-phosphate + L-glutamate + phosphate + 3 H2O + H(+). The catalysed reaction is L-glutamine + H2O = L-glutamate + NH4(+). Its pathway is cofactor biosynthesis; pyridoxal 5'-phosphate biosynthesis. Catalyzes the hydrolysis of glutamine to glutamate and ammonia as part of the biosynthesis of pyridoxal 5'-phosphate. The resulting ammonia molecule is channeled to the active site of PdxS. This Streptococcus pneumoniae (strain CGSP14) protein is Pyridoxal 5'-phosphate synthase subunit PdxT.